The primary structure comprises 321 residues: Lipoyl synthase (321 aa).

Positions 68, 73, 79, 94, 98, 101, and 308 each coordinate [4Fe-4S] cluster. Positions 80–297 (FNHGTATFMI…KAEAIAMGFT (218 aa)) constitute a Radical SAM core domain.

Belongs to the radical SAM superfamily. Lipoyl synthase family. [4Fe-4S] cluster is required as a cofactor.

Its subcellular location is the cytoplasm. It catalyses the reaction [[Fe-S] cluster scaffold protein carrying a second [4Fe-4S](2+) cluster] + N(6)-octanoyl-L-lysyl-[protein] + 2 oxidized [2Fe-2S]-[ferredoxin] + 2 S-adenosyl-L-methionine + 4 H(+) = [[Fe-S] cluster scaffold protein] + N(6)-[(R)-dihydrolipoyl]-L-lysyl-[protein] + 4 Fe(3+) + 2 hydrogen sulfide + 2 5'-deoxyadenosine + 2 L-methionine + 2 reduced [2Fe-2S]-[ferredoxin]. It functions in the pathway protein modification; protein lipoylation via endogenous pathway; protein N(6)-(lipoyl)lysine from octanoyl-[acyl-carrier-protein]: step 2/2. Catalyzes the radical-mediated insertion of two sulfur atoms into the C-6 and C-8 positions of the octanoyl moiety bound to the lipoyl domains of lipoate-dependent enzymes, thereby converting the octanoylated domains into lipoylated derivatives. This Pectobacterium carotovorum subsp. carotovorum (strain PC1) protein is Lipoyl synthase.